Consider the following 30-residue polypeptide: Photosystem I reaction center subunit XII (30 aa).

A helical transmembrane segment spans residues 6–26 (VFTILAIALVPAVMALLLGSA).

It belongs to the PsaM family.

Its subcellular location is the cellular thylakoid membrane. This is Photosystem I reaction center subunit XII from Synechococcus sp. (strain JA-2-3B'a(2-13)) (Cyanobacteria bacterium Yellowstone B-Prime).